The primary structure comprises 561 residues: Carbohydrate sulfotransferase 15 (561 aa).

Topologically, residues M1–C80 are cytoplasmic. The chain crosses the membrane as a helical; Signal-anchor for type II membrane protein span at residues S81–A101. Over H102 to T561 the chain is Lumenal. K263 to T267 serves as a coordination point for 3'-phosphoadenylyl sulfate. The N-linked (GlcNAc...) asparagine glycan is linked to N364. Residues R392 and S400 each contribute to the 3'-phosphoadenylyl sulfate site.

Belongs to the sulfotransferase 1 family. In terms of assembly, homodimer; disulfide-linked (Potential). The relevance of homodimerization is however unsure. May interact with phosphorylated proteins in resting B-cells, including HCK. A divalent metal cation is required as a cofactor. The cofactor is glutathione. Glycosylated.

The protein localises to the golgi apparatus membrane. The enzyme catalyses dermatan 4'-sulfate + n 3'-phosphoadenylyl sulfate = dermatan 4',6'-bissulfate + n adenosine 3',5'-bisphosphate + n H(+). The catalysed reaction is chondroitin 4'-sulfate + n 3'-phosphoadenylyl sulfate = chondroitin 4',6'-bissulfate + n adenosine 3',5'-bisphosphate + n H(+). With respect to regulation, inhibited by phenyl beta-GalNAc(4,6-SO(4)). Its function is as follows. Sulfotransferase that transfers sulfate from 3'-phosphoadenosine 5'-phosphosulfate (PAPS) to the C-6 hydroxyl group of the GalNAc 4-sulfate residue of chondroitin sulfate A and forms chondroitin sulfate E containing GlcA-GalNAc(4,6-SO(4)) repeating units. It also transfers sulfate to a unique non-reducing terminal sequence, GalNAc(4SO4)-GlcA(2SO4)-GalNAc(6SO4), to yield a highly sulfated structure similar to the structure found in thrombomodulin chondroitin sulfate. May also act as a B-cell receptor involved in BCR ligation-mediated early activation that mediate regulatory signals key to B-cell development and/or regulation of B-cell-specific RAG expression; however such results are unclear in vivo. This chain is Carbohydrate sulfotransferase 15 (Chst15), found in Mus musculus (Mouse).